A 382-amino-acid polypeptide reads, in one-letter code: Mannitol-1-phosphate 5-dehydrogenase (382 aa).

3–14 (ALHFGAGNIGRG) serves as a coordination point for NAD(+).

It belongs to the mannitol dehydrogenase family.

The catalysed reaction is D-mannitol 1-phosphate + NAD(+) = beta-D-fructose 6-phosphate + NADH + H(+). This Cronobacter sakazakii (strain ATCC BAA-894) (Enterobacter sakazakii) protein is Mannitol-1-phosphate 5-dehydrogenase.